Here is a 496-residue protein sequence, read N- to C-terminus: WD repeat-containing protein 37 (496 aa).

Polar residues-rich tracts occupy residues 1–13 (MPTESGSCSTARQ) and 22–31 (SLSIRRTNSS). The disordered stretch occupies residues 1 to 50 (MPTESGSCSTARQAKQKRKSHSLSIRRTNSSEQERTGLPREMLEGQDSKL). Positions 32–47 (EQERTGLPREMLEGQD) are enriched in basic and acidic residues. WD repeat units follow at residues 154 to 194 (GHRD…CLVK) and 197 to 236 (GHVGSVNSIKFHPSEQLALTASGDQTAHIWRYVVQLPTPQ). A disordered region spans residues 238–267 (VADTSQQISGEDEIECSDKDEPDIDGDVSS). The span at 247–265 (GEDEIECSDKDEPDIDGDV) shows a compositional bias: acidic residues. WD repeat units follow at residues 281 to 320 (SHQGVVIAADWLVGGKQVVTASWDRTANLYDVETSELVHS), 323 to 362 (GHDQELTHCCTHPTQRLVVTSSRDTTFRLWDFRDPSIHSV), 367 to 405 (GHTDTVTSAVFTVGDNVVSGSDDRTVKVWDLKNMRSPIA), 408 to 447 (RTDSAINRINVCVGQKIIALPHDNRQVRLFDMSGVRLARL), and 454 to 495 (GHRR…LLQE).

As to quaternary structure, forms homodimers. Interacts with PACS1. Interacts with PACS2.

The protein resides in the cytoplasm. Its subcellular location is the nucleus. Required for normal ER Ca2+ handling in lymphocytes. Together with PACS1, it plays an essential role in stabilizing peripheral lymphocyte populations. In Mus musculus (Mouse), this protein is WD repeat-containing protein 37 (Wdr37).